Here is a 532-residue protein sequence, read N- to C-terminus: uncharacterized protein (532 aa).

Disordered stretches follow at residues 26 to 84 (KALR…TDSE), 97 to 129 (VFDE…QVGR), and 157 to 470 (SKAA…HTCQ). Over residues 30-40 (GNNNGSSTSGG) the composition is skewed to low complexity. Residues 67–80 (DIISQARRQVSLSR) show a composition bias toward polar residues. Basic and acidic residues predominate over residues 157-181 (SKAAGEESKRHAHFESIQEEEKISE). Over residues 198 to 213 (IQSGSESSDSDSIIFD) the composition is skewed to low complexity. Basic and acidic residues predominate over residues 237 to 249 (VEKKIEKPAVKEQ). Low complexity-rich tracts occupy residues 259-290 (PTPT…SASE), 298-315 (ESQV…SSSK), and 326-335 (SSSSSASTIS). Over residues 347-356 (KTKKPDKKRA) the composition is skewed to basic residues. 4 stretches are compositionally biased toward basic and acidic residues: residues 357-368 (KPDDIRQNKKPE), 389-403 (STVR…ESLK), 410-419 (KSSEKMEKPR), and 437-448 (RDAEREQDIERR). Basic residues predominate over residues 449–461 (REKRARRFRSRRR).

This is an uncharacterized protein from Caenorhabditis elegans.